Here is a 220-residue protein sequence, read N- to C-terminus: UPF0319 protein YccT (220 aa).

The signal sequence occupies residues 1–20 (MKTGALATFLALCLPVTVFA).

The protein belongs to the UPF0319 family.

The chain is UPF0319 protein YccT from Salmonella enteritidis PT4 (strain P125109).